Consider the following 59-residue polypeptide: Potassium channel toxin alpha-KTx 15.2 (59 aa).

The N-terminal stretch at 1–22 is a signal peptide; that stretch reads MKFSSIILLTLLICSMSKFGNC. Residue glutamine 23 is modified to Pyrrolidone carboxylic acid. Cystine bridges form between cysteine 30–cysteine 50, cysteine 35–cysteine 55, and cysteine 39–cysteine 57.

Belongs to the short scorpion toxin superfamily. Potassium channel inhibitor family. Alpha-KTx 15 subfamily. In terms of tissue distribution, expressed by the venom gland.

The protein resides in the secreted. In terms of biological role, blocks both human ERG1/Kv11.1/KCNH2 potassium channels (in a reversible manner) and A-type voltage-gated potassium channels Kv4/KCND (in an irreversible manner). The presence of the Kv4-associated proteins DPP6 or DPP10 is mandatory to have high-affinity blockade of Kv4.2/KCND2 and Kv4.3/KCND3 channels. In contrast, the presence of the Kv4-associated protein KChIP1/KCNIP1 does not enhance the affinity blockade. May dispose of two functional faces (A and B); the two basic residues (Arg-40 and Lys-41) on the alpha-helix side of the peptide that blocks the hERG current (face A) and the typical dyad through which it blocks A-type currents on the beta-sheet side (face B). In adult rat brain, it binds to sites in the striatum, hippocampus, superior colliculus, and cerebellum. It shares the same target in rat brain than AaTX1 (AC Q867F4) and AmmTX3 (AC P60208). In DPP6 knockout mice, A-type currents are much less affected by the toxin than in wild-type mice. The polypeptide is Potassium channel toxin alpha-KTx 15.2 (Olivierus martensii (Manchurian scorpion)).